A 205-amino-acid chain; its full sequence is Small ribosomal subunit protein uS4B (205 aa).

The S4 RNA-binding domain maps to 94–157 (RRLDNVVFRA…LNLPIVLGTL (64 aa)).

Belongs to the universal ribosomal protein uS4 family. As to quaternary structure, part of the 30S ribosomal subunit. Contacts protein S5. The interaction surface between S4 and S5 is involved in control of translational fidelity.

In terms of biological role, one of the primary rRNA binding proteins, it binds directly to 16S rRNA where it nucleates assembly of the body of the 30S subunit. Its function is as follows. With S5 and S12 plays an important role in translational accuracy. This Nitrosomonas europaea (strain ATCC 19718 / CIP 103999 / KCTC 2705 / NBRC 14298) protein is Small ribosomal subunit protein uS4B.